The sequence spans 155 residues: Aspartate carbamoyltransferase regulatory chain (155 aa).

Zn(2+) is bound by residues C109, C114, C138, and C141.

Belongs to the PyrI family. As to quaternary structure, contains catalytic and regulatory chains. Zn(2+) serves as cofactor.

Functionally, involved in allosteric regulation of aspartate carbamoyltransferase. In Vibrio cholerae serotype O1 (strain ATCC 39541 / Classical Ogawa 395 / O395), this protein is Aspartate carbamoyltransferase regulatory chain.